Here is a 432-residue protein sequence, read N- to C-terminus: MQVTVETKEGLERVLTITVPAANIEDAVNAELRNIAKNRRFDGFRKGKVPMKMVAKMYGSAVRHDKMGEVMQRHFIEAIVKDKINPAGAPTFAPVEFAEGQDLVFTATFEIYPEVTLQGLDKVVVEKPQVEVKDEDVAEMLETLRKQQATWSDADVAAEDGTRATINFVGSIDGELFEGGKADNFPLEMGQGRMIPGFEDGIKGKKAGDELTINVNFPEDYHAENLKGKAAEFAITVVKVEARELPEMNDEFVTKFGAQGGVEGLKTEVRKNMERELAQTVKNKIKEQAINGLVEQNNIDVPSALIDQEVQVLRQQAVQRFGGNADSAPELPRELFEEQAKRRVVVGLLLGEVIKTEELKADDEKVKALINEMASAYEDPTEVVAYYEGNEQMMNNMRNVALEEQAIDAILAKAQVSEKAVGFNELMNQQPA.

The PPIase FKBP-type domain maps to 161-246 (GTRATINFVG…VVKVEARELP (86 aa)).

The protein belongs to the FKBP-type PPIase family. Tig subfamily.

The protein localises to the cytoplasm. It carries out the reaction [protein]-peptidylproline (omega=180) = [protein]-peptidylproline (omega=0). In terms of biological role, involved in protein export. Acts as a chaperone by maintaining the newly synthesized protein in an open conformation. Functions as a peptidyl-prolyl cis-trans isomerase. This Aliivibrio salmonicida (strain LFI1238) (Vibrio salmonicida (strain LFI1238)) protein is Trigger factor.